A 166-amino-acid chain; its full sequence is Peptide methionine sulfoxide reductase MsrA (166 aa).

Cysteine 11 is a catalytic residue.

It belongs to the MsrA Met sulfoxide reductase family.

It carries out the reaction L-methionyl-[protein] + [thioredoxin]-disulfide + H2O = L-methionyl-(S)-S-oxide-[protein] + [thioredoxin]-dithiol. The enzyme catalyses [thioredoxin]-disulfide + L-methionine + H2O = L-methionine (S)-S-oxide + [thioredoxin]-dithiol. In terms of biological role, has an important function as a repair enzyme for proteins that have been inactivated by oxidation. Catalyzes the reversible oxidation-reduction of methionine sulfoxide in proteins to methionine. In Mycoplasmopsis pulmonis (strain UAB CTIP) (Mycoplasma pulmonis), this protein is Peptide methionine sulfoxide reductase MsrA.